The following is a 450-amino-acid chain: 23S rRNA (uracil(1939)-C(5))-methyltransferase RlmD (450 aa).

In terms of domain architecture, TRAM spans 12–70 (SKQLSAKLSLSVNQLDHLGAGIAQHQGKVVFIPGALPDETVTVQLTEQKKNYARAKLIK). The [4Fe-4S] cluster site is built by C83, C89, C92, and C171. The S-adenosyl-L-methionine site is built by Q283, F312, N317, E333, D360, and D380. The active-site Nucleophile is the C406.

Belongs to the class I-like SAM-binding methyltransferase superfamily. RNA M5U methyltransferase family. RlmD subfamily.

It carries out the reaction uridine(1939) in 23S rRNA + S-adenosyl-L-methionine = 5-methyluridine(1939) in 23S rRNA + S-adenosyl-L-homocysteine + H(+). Functionally, catalyzes the formation of 5-methyl-uridine at position 1939 (m5U1939) in 23S rRNA. This is 23S rRNA (uracil(1939)-C(5))-methyltransferase RlmD from Shewanella baltica (strain OS223).